The chain runs to 595 residues: Elongation factor 4 (595 aa).

In terms of domain architecture, tr-type G spans 2–183 (KNIRNFCIIA…AIVEQVPAPA (182 aa)). GTP contacts are provided by residues 14–19 (DHGKST) and 130–133 (NKVD).

This sequence belongs to the TRAFAC class translation factor GTPase superfamily. Classic translation factor GTPase family. LepA subfamily.

The protein resides in the cell inner membrane. It carries out the reaction GTP + H2O = GDP + phosphate + H(+). Functionally, required for accurate and efficient protein synthesis under certain stress conditions. May act as a fidelity factor of the translation reaction, by catalyzing a one-codon backward translocation of tRNAs on improperly translocated ribosomes. Back-translocation proceeds from a post-translocation (POST) complex to a pre-translocation (PRE) complex, thus giving elongation factor G a second chance to translocate the tRNAs correctly. Binds to ribosomes in a GTP-dependent manner. The sequence is that of Elongation factor 4 from Porphyromonas gingivalis (strain ATCC 33277 / DSM 20709 / CIP 103683 / JCM 12257 / NCTC 11834 / 2561).